A 282-amino-acid chain; its full sequence is Cell cycle checkpoint protein RAD1 (282 aa).

Belongs to the rad1 family. As to quaternary structure, component of the toroidal 9-1-1 (RAD9-RAD1-HUS1) complex, composed of RAD9A, RAD1 and HUS1. The 9-1-1 complex associates with LIG1, POLB, FEN1, RAD17, HDAC1, RPA1 and RPA2. The 9-1-1 complex associates with the RAD17-RFC complex. RAD1 interacts with POLB, FEN1, HUS1, HUS1B, RAD9A and RAD9B. Interacts with DNAJC7. Interacts with RHNO1; interaction is direct. In terms of tissue distribution, expressed in testis, uterus, bladder, spleen, ovaries, lung, brain and muscle (at protein level).

The protein resides in the nucleus. In terms of biological role, component of the 9-1-1 cell-cycle checkpoint response complex that plays a major role in DNA repair. The 9-1-1 complex is recruited to DNA lesion upon damage by the RAD17-replication factor C (RFC) clamp loader complex. Acts then as a sliding clamp platform on DNA for several proteins involved in long-patch base excision repair (LP-BER). The 9-1-1 complex stimulates DNA polymerase beta (POLB) activity by increasing its affinity for the 3'-OH end of the primer-template and stabilizes POLB to those sites where LP-BER proceeds; endonuclease FEN1 cleavage activity on substrates with double, nick, or gap flaps of distinct sequences and lengths; and DNA ligase I (LIG1) on long-patch base excision repair substrates. The 9-1-1 complex is necessary for the recruitment of RHNO1 to sites of double-stranded breaks (DSB) occurring during the S phase. The chain is Cell cycle checkpoint protein RAD1 (RAD1) from Homo sapiens (Human).